A 236-amino-acid chain; its full sequence is Probable apoptosis inhibitor 2 (236 aa).

The stretch at 85 to 150 (RKRSFASFKW…AHAADCAFRR (66 aa)) is one BIR repeat. The Zn(2+) site is built by Cys-123, Cys-126, His-142, and Cys-146. The segment at 189–223 (CKVCFVNEKSVCFLPCRHLVVCAECSPRCKRCCVC) adopts an RING-type zinc-finger fold.

The polypeptide is Probable apoptosis inhibitor 2 (IAP2) (Orgyia pseudotsugata multicapsid polyhedrosis virus (OpMNPV)).